A 323-amino-acid chain; its full sequence is 4-hydroxythreonine-4-phosphate dehydrogenase (323 aa).

Thr-133 serves as a coordination point for substrate. Residues His-161, His-206, and His-261 each coordinate a divalent metal cation. Lys-269, Asn-278, and Arg-287 together coordinate substrate.

The protein belongs to the PdxA family. In terms of assembly, homodimer. Zn(2+) serves as cofactor. The cofactor is Mg(2+). Requires Co(2+) as cofactor.

It localises to the cytoplasm. It carries out the reaction 4-(phosphooxy)-L-threonine + NAD(+) = 3-amino-2-oxopropyl phosphate + CO2 + NADH. The protein operates within cofactor biosynthesis; pyridoxine 5'-phosphate biosynthesis; pyridoxine 5'-phosphate from D-erythrose 4-phosphate: step 4/5. Its function is as follows. Catalyzes the NAD(P)-dependent oxidation of 4-(phosphooxy)-L-threonine (HTP) into 2-amino-3-oxo-4-(phosphooxy)butyric acid which spontaneously decarboxylates to form 3-amino-2-oxopropyl phosphate (AHAP). The chain is 4-hydroxythreonine-4-phosphate dehydrogenase from Xanthomonas axonopodis pv. citri (strain 306).